The following is a 394-amino-acid chain: MAKAKFERNKPHVNVGTIGHVDHGKTTLTAAISHVLAKTYGGEAKDFSQIDNAPEERERGITINTSHIEYDTPTRHYAHVDCPGHADYVKNMITGAAQMDGAILVVASTDGPMPQTREHILLSRQVGVPFIIVFMNKCDMVDDAELLELVEMEVRELLSEYDFPGDDLPVIQGSALKALEGEPEWEAKIIELAAALDSYIPEPERDIDKPFLMPIEDVFSISGRGTVVTGRVERGIVRVGDEVEIVGIRATTKTTCTGVEMFRKLLDEGRAGENCGILLRGTKRDDVERGQVLSKPGSINPHTTFESEVYVLSKEEGGRHTPFFKGYRPQFYFRTTDVTGTIELPEGVEMVMPGDNIKMKVTLICPIAMDEGLRFAIREGGRTVGAGVVAKIFA.

Residues 10–204 (KPHVNVGTIG…ALDSYIPEPE (195 aa)) form the tr-type G domain. Residues 19–26 (GHVDHGKT) are G1. 19–26 (GHVDHGKT) provides a ligand contact to GTP. Mg(2+) is bound at residue Thr26. The G2 stretch occupies residues 60 to 64 (GITIN). The segment at 81-84 (DCPG) is G3. GTP is bound by residues 81-85 (DCPGH) and 136-139 (NKCD). The segment at 136–139 (NKCD) is G4. Residues 174-176 (SAL) form a G5 region.

The protein belongs to the TRAFAC class translation factor GTPase superfamily. Classic translation factor GTPase family. EF-Tu/EF-1A subfamily. Monomer.

It is found in the cytoplasm. The enzyme catalyses GTP + H2O = GDP + phosphate + H(+). GTP hydrolase that promotes the GTP-dependent binding of aminoacyl-tRNA to the A-site of ribosomes during protein biosynthesis. The chain is Elongation factor Tu from Shewanella sp. (strain ANA-3).